We begin with the raw amino-acid sequence, 185 residues long: Protein GrpE (185 aa).

The protein belongs to the GrpE family. In terms of assembly, homodimer.

The protein localises to the cytoplasm. In terms of biological role, participates actively in the response to hyperosmotic and heat shock by preventing the aggregation of stress-denatured proteins, in association with DnaK and GrpE. It is the nucleotide exchange factor for DnaK and may function as a thermosensor. Unfolded proteins bind initially to DnaJ; upon interaction with the DnaJ-bound protein, DnaK hydrolyzes its bound ATP, resulting in the formation of a stable complex. GrpE releases ADP from DnaK; ATP binding to DnaK triggers the release of the substrate protein, thus completing the reaction cycle. Several rounds of ATP-dependent interactions between DnaJ, DnaK and GrpE are required for fully efficient folding. This chain is Protein GrpE, found in Methanobrevibacter smithii (strain ATCC 35061 / DSM 861 / OCM 144 / PS).